The chain runs to 328 residues: Lipoate--protein ligase 1 (328 aa).

The BPL/LPL catalytic domain occupies 27-214 (PAEESYFLFY…TIFGETEVEE (188 aa)). ATP contacts are provided by residues arginine 69, 74-77 (GAVY), and lysine 131. Lysine 131 is a binding site for (R)-lipoate.

The enzyme catalyses L-lysyl-[lipoyl-carrier protein] + (R)-lipoate + ATP = N(6)-[(R)-lipoyl]-L-lysyl-[lipoyl-carrier protein] + AMP + diphosphate + H(+). The protein operates within protein modification; protein lipoylation via exogenous pathway; protein N(6)-(lipoyl)lysine from lipoate: step 1/2. It functions in the pathway protein modification; protein lipoylation via exogenous pathway; protein N(6)-(lipoyl)lysine from lipoate: step 2/2. In terms of biological role, catalyzes the lipoylation of proteins, such as GcvH (SAV0833) and GcvH-L (SAV0324), likely via the ATP-dependent activation of lipoate to lipoyl-AMP and the transfer of the activated lipoyl onto the lipoyl domain of the target protein. The sequence is that of Lipoate--protein ligase 1 from Staphylococcus aureus (strain Mu50 / ATCC 700699).